The chain runs to 67 residues: Large ribosomal subunit protein uL30 (67 aa).

It belongs to the universal ribosomal protein uL30 family. As to quaternary structure, part of the 50S ribosomal subunit.

The chain is Large ribosomal subunit protein uL30 from Thermotoga maritima (strain ATCC 43589 / DSM 3109 / JCM 10099 / NBRC 100826 / MSB8).